We begin with the raw amino-acid sequence, 343 residues long: L-threonine 3-dehydrogenase (343 aa).

C38 contributes to the Zn(2+) binding site. Active-site charge relay system residues include T40 and H43. Residues H63, E64, C93, C96, C99, and C107 each coordinate Zn(2+). NAD(+) contacts are provided by residues I175, D195, R200, 262-264, and 286-287; these read LGI and IY.

Belongs to the zinc-containing alcohol dehydrogenase family. As to quaternary structure, homotetramer. Zn(2+) is required as a cofactor.

The protein localises to the cytoplasm. The enzyme catalyses L-threonine + NAD(+) = (2S)-2-amino-3-oxobutanoate + NADH + H(+). It participates in amino-acid degradation; L-threonine degradation via oxydo-reductase pathway; glycine from L-threonine: step 1/2. Its function is as follows. Catalyzes the NAD(+)-dependent oxidation of L-threonine to 2-amino-3-ketobutyrate. The chain is L-threonine 3-dehydrogenase from Paraburkholderia phytofirmans (strain DSM 17436 / LMG 22146 / PsJN) (Burkholderia phytofirmans).